The chain runs to 276 residues: MPEMPEVETVRRTLIPLIKGKTIEKVILWYPKIVATDHEKFLSELPGKKIIDIDRYAKYLLIRLSDNLTIVSHLRMEGKYHLTTSDAPKDKHDHVEFIFTDGTALRYNDVRKFGRMQLILTGTERQTTGIGKLGYEPNSSEFTSEYLVNGLKRKKKNIKNTLLDQSVVAGLGNIYVDEVLWRTKIHPLSQANKIPAEKVMELHDQINQIITEAIKLQGTTVHSFLNANGQVGGFQSKLQVYGHVGEPCPVCGTKFEKIKVNGRGTTFCPHCQVIYK.

The active-site Schiff-base intermediate with DNA is Pro2. Residue Glu3 is the Proton donor of the active site. The Proton donor; for beta-elimination activity role is filled by Lys58. Residues His92, Arg111, and Lys154 each contribute to the DNA site. Residues Gln239 to Val273 form an FPG-type zinc finger. Arg263 functions as the Proton donor; for delta-elimination activity in the catalytic mechanism.

Belongs to the FPG family. In terms of assembly, monomer. Zn(2+) is required as a cofactor.

It catalyses the reaction Hydrolysis of DNA containing ring-opened 7-methylguanine residues, releasing 2,6-diamino-4-hydroxy-5-(N-methyl)formamidopyrimidine.. The enzyme catalyses 2'-deoxyribonucleotide-(2'-deoxyribose 5'-phosphate)-2'-deoxyribonucleotide-DNA = a 3'-end 2'-deoxyribonucleotide-(2,3-dehydro-2,3-deoxyribose 5'-phosphate)-DNA + a 5'-end 5'-phospho-2'-deoxyribonucleoside-DNA + H(+). In terms of biological role, involved in base excision repair of DNA damaged by oxidation or by mutagenic agents. Acts as a DNA glycosylase that recognizes and removes damaged bases. Has a preference for oxidized purines, such as 7,8-dihydro-8-oxoguanine (8-oxoG). Has AP (apurinic/apyrimidinic) lyase activity and introduces nicks in the DNA strand. Cleaves the DNA backbone by beta-delta elimination to generate a single-strand break at the site of the removed base with both 3'- and 5'-phosphates. This chain is Formamidopyrimidine-DNA glycosylase, found in Lactobacillus helveticus (strain DPC 4571).